The sequence spans 1417 residues: DNA-directed RNA polymerase subunit beta' (1417 aa).

Residues Cys68, Cys70, Cys83, and Cys86 each contribute to the Zn(2+) site. Mg(2+) is bound by residues Asp458, Asp460, and Asp462. Positions 811, 884, 891, and 894 each coordinate Zn(2+).

Belongs to the RNA polymerase beta' chain family. In terms of assembly, the RNAP catalytic core consists of 2 alpha, 1 beta, 1 beta' and 1 omega subunit. When a sigma factor is associated with the core the holoenzyme is formed, which can initiate transcription. Mg(2+) serves as cofactor. It depends on Zn(2+) as a cofactor.

It carries out the reaction RNA(n) + a ribonucleoside 5'-triphosphate = RNA(n+1) + diphosphate. In terms of biological role, DNA-dependent RNA polymerase catalyzes the transcription of DNA into RNA using the four ribonucleoside triphosphates as substrates. In Francisella tularensis subsp. novicida (strain U112), this protein is DNA-directed RNA polymerase subunit beta'.